The chain runs to 498 residues: Probable global transactivator (498 aa).

A Helicase ATP-binding domain is found at 43–206; the sequence is RERRGRPHGG…YAIIHFLRCR (164 aa). Residue 55–63 coordinates ATP; it reads ADDMGLGKT. Residues 157-160 carry the DEAH box motif; that stretch reads DEAH. The 157-residue stretch at 337–493 folds into the Helicase C-terminal domain; the sequence is ELVQRVLDTP…RTALNYEDIK (157 aa).

This sequence belongs to the SNF2/RAD54 helicase family.

This is Probable global transactivator (GTA) from Orgyia pseudotsugata (Douglas-fir tussock moth).